A 447-amino-acid polypeptide reads, in one-letter code: Polyamine export protein (447 aa).

The Cytoplasmic segment spans residues 1–4 (MLNS). Residues 1–197 (MLNSIFIIFC…ALAGVLRKQE (197 aa)) enclose the CNNM transmembrane domain. A helical membrane pass occupies residues 5-25 (IFIIFCLIAVSAFFSISEISL). Residues 26–54 (AASRKIKLKLLADEGSINAQRVLKMQENP) are Periplasmic-facing. A helical membrane pass occupies residues 55–75 (GMFFTVVQIGLNAVAILGGIV). The Cytoplasmic portion of the chain corresponds to 76-99 (GDAAFSPAFSALFSHYMSPELSEQ). Residues 100 to 120 (LSFILSFSLVTGLFILFADLT) form a helical membrane-spanning segment. At 121-141 (PKRIGMIAPEAVALRIINPMR) the chain is on the periplasmic side. The helical transmembrane segment at 142 to 162 (FCLFVFRPLVWLFNGMANNIF) threads the bilayer. The Cytoplasmic portion of the chain corresponds to 163–447 (RLFKIPMVRK…DAQGKEDSAA (285 aa)). 2 CBS domains span residues 216–275 (MTSR…NQSM) and 282–343 (QIRN…GLEE).

It belongs to the UPF0053 family. PaeA subfamily.

The protein resides in the cell inner membrane. In terms of biological role, involved in cadaverine and putrescine tolerance in stationary phase. May facilitate the efflux of both cadaverine and putrescine from the cytoplasm, reducing potentially toxic levels under certain stress conditions. In Salmonella typhimurium (strain 14028s / SGSC 2262), this protein is Polyamine export protein.